A 716-amino-acid chain; its full sequence is Calpain clp-4 (716 aa).

A disordered region spans residues 31–53 (DDDDKQEAPVAVSKAPKGKGSNH). Positions 240-536 (LFEDPEFPAT…FTQMEVCNLT (297 aa)) constitute a Calpain catalytic domain. Residues C295, H452, and N476 contribute to the active site.

It belongs to the peptidase C2 family.

Its function is as follows. Calcium-regulated non-lysosomal thiol-protease which catalyzes limited proteolysis of substrates. Promotes starvation-induced muscle atrophy. The protein is Calpain clp-4 of Caenorhabditis elegans.